The chain runs to 432 residues: Histidine--tRNA ligase (432 aa).

This sequence belongs to the class-II aminoacyl-tRNA synthetase family.

It localises to the cytoplasm. It catalyses the reaction tRNA(His) + L-histidine + ATP = L-histidyl-tRNA(His) + AMP + diphosphate + H(+). The sequence is that of Histidine--tRNA ligase from Pyrococcus furiosus (strain ATCC 43587 / DSM 3638 / JCM 8422 / Vc1).